Reading from the N-terminus, the 912-residue chain is Phosphoenolpyruvate carboxylase (912 aa).

Catalysis depends on residues His138 and Lys575.

It belongs to the PEPCase type 1 family. It depends on Mg(2+) as a cofactor.

It carries out the reaction oxaloacetate + phosphate = phosphoenolpyruvate + hydrogencarbonate. Forms oxaloacetate, a four-carbon dicarboxylic acid source for the tricarboxylic acid cycle. This Lactobacillus acidophilus (strain ATCC 700396 / NCK56 / N2 / NCFM) protein is Phosphoenolpyruvate carboxylase.